A 4836-amino-acid polypeptide reads, in one-letter code: E3 ubiquitin-protein ligase HERC2 (4836 aa).

Positions 58–90 are disordered; sequence LPLRKDDGVDAQSGTKKEDLNDKEKKEEEETPA. The span at 72-85 shows a compositional bias: basic and acidic residues; that stretch reads TKKEDLNDKEKKEE. Thr273 carries the post-translational modification Phosphothreonine. One copy of the RCC1 1-1 repeat lies at 416-462; it reads PTSHKGSLQEVIGWGLIGWKYYANVIGPIQCEGLASLGVMQVACAEK. Residues 463–513 form an RCC1 1-2 repeat; sequence RFLILSRNGRVYTQAYNSDMLAPQLVQGLASRNIVKIAAHSDGHHYLALAA. The stretch at 514–569 is one RCC1 1-3 repeat; it reads TGEVYSWGCGDGGRLGHGDTVPLEEPKVISAFSGKQAGKHVVHIACGSTYSAAITA. The stretch at 570-621 is one RCC1 1-4 repeat; it reads EGELYTWGRGNYGRLGHGSSEDEAIPMLVAGLKGLKVIDVACGSGDAQTLAV. The stretch at 624-675 is one RCC1 1-5 repeat; sequence NGQVWSWGDGDYGKLGRGGSDGCKTPKLIEKLQDLDVIKVRCGSQFSIALTK. At Thr648 the chain carries Phosphothreonine. An RCC1 1-6 repeat occupies 676-727; the sequence is DGQVYSWGKGDNQRLGHGTEEHVRYPKLLEGLQGKKVIDVAAGSTHCLALTE. An RCC1 1-7 repeat occupies 729–779; sequence SEVHSWGSNDQCQHFDTLRVTKPEPTALPGLDSKHIVGIACGPAQSFAWSS. Residues 948 to 981 are a coiled coil; it reads ALNAAITAEIQDIEAKKEAQKEKEIDEQEASAST. The Cytochrome b5 heme-binding domain maps to 1208–1284; sequence VTLIRKADLE…MHAFCVGQYL (77 aa). Ser1578 carries the phosphoserine modification. The MIB/HERC2 domain occupies 1860 to 1933; that stretch reads SGPELAAMMK…KYDLKLVELP (74 aa). Ser1943 bears the Phosphoserine mark. At Thr1945 the chain carries Phosphothreonine. The disordered stretch occupies residues 2351–2376; sequence GTGTLQTDDGAAASPDLGDMSPEGPQ. Ser2455 bears the Phosphoserine mark. The CPH domain maps to 2555–2631; sequence RADFLSNDDY…RYIHVELIGY (77 aa). The ZZ-type zinc-finger motif lies at 2704 to 2756; the sequence is HPGVTCDGCQTFPINGSRFKCRNCDDFDFCETCFKTKKHNTRHTFGRINEPGQ. Zn(2+) contacts are provided by Cys2709, Cys2712, Cys2724, Cys2727, Cys2733, Cys2736, His2742, and His2746. The region spanning 2760–2937 is the DOC domain; sequence FCGRSGKQLK…ASDNEEEEDD (178 aa). The interval 2928–2947 is disordered; that stretch reads ASDNEEEEDDKGSTGSLIRK. The residue at position 2929 (Ser2929) is a Phosphoserine. An RCC1 2-1 repeat occupies 2959-3010; sequence RTKVFVWGLNDKDQLGGLKGSKIKVPSFSETLSALNVVQVAGGSKSLFAVTV. The stretch at 3011–3065 is one RCC1 2-2 repeat; the sequence is EGKVYSCGEATNGRLGLGMSSGTVPIPRQITALSSYVVKKVAVHSGGRHATALTV. The RCC1 2-3 repeat unit spans residues 3066-3117; sequence DGKVFSWGEGDDGKLGHFSRMNCDKPRLIEALKTKRIRDIACGSSHSAALTS. Residues 3119 to 3169 form an RCC1 2-4 repeat; sequence GELYTWGLGEYGRLGHGDNTTQLKPKMVKVLLGHRVIQVACGSRDAQTLAL. The RCC1 2-5 repeat unit spans residues 3172-3223; the sequence is EGLVFSWGDGDFGKLGRGGSEGCNIPQNIERLNGQGVCQIECGAQFSLALTK. An RCC1 2-6 repeat occupies 3225–3275; it reads GVVWTWGKGDYFRLGHGSDVHVRKPQVVEGLRGKKIVHVAVGALHCLAVTD. The RCC1 2-7 repeat unit spans residues 3276–3327; sequence SGQVYAWGDNDHGQQGNGTTTVNRKPTLVQGLEGQKITRVACGSSHSVAWTT. Disordered stretches follow at residues 3479–3499, 3517–3537, and 3604–3632; these read DAVT…RPFI, KTKE…QSLD, and SQSG…SGTV. The segment covering 3480–3495 has biased composition (low complexity); sequence AVTPSAVTPSAPSASS. Polar residues-rich tracts occupy residues 3604–3613 and 3620–3631; these read SQSGRLSSQP and HPYTDDTSTSGT. The stretch at 3953–4004 is one RCC1 3-1 repeat; that stretch reads SGTIYGWGHNHRGQLGGIEGAKVKVPTPCEALATLRPVQLIGGEQTLFAVTA. The RCC1 3-2 repeat unit spans residues 4006-4058; that stretch reads GKLYATGYGAGGRLGIGGTESVSTPTLLESIQHVFIKKVAVNSGGKHCLALSS. The RCC1 3-3 repeat unit spans residues 4060–4110; sequence GEVYSWGEAEDGKLGHGNRSPCDRPRVIESLRGIEVVDVAAGGAHSACVTA. One copy of the RCC1 3-4 repeat lies at 4112–4164; the sequence is GDLYTWGKGRYGRLGHSDSEDQLKPKLVEALQGHRVIDIACGSGDAQTLCLTD. The RCC1 3-5 repeat unit spans residues 4166-4216; it reads DTVWSWGDGDYGKLGRGGSDGCKVPMKIDSLTGLGVVKVECGSQFSVALTK. Residues 4218 to 4268 form an RCC1 3-6 repeat; the sequence is GAVYTWGKGDYHRLGHGSDDHVRRPRQVQGLQGKKVIAIATGSLHCVCCTE. The RCC1 3-7 repeat unit spans residues 4270–4320; sequence GEVYTWGDNDEGQLGDGTTNAIQRPRLVAALQGKKVNRVACGSAHTLAWST. The HECT domain occupies 4459–4796; it reads DSLLLPHRVW…IHFCKSIDTD (338 aa). Catalysis depends on Cys4764, which acts as the Glycyl thioester intermediate. Residues 4806–4836 form a disordered region; sequence EPAADDSSEDSDNEDADSFASDSTQDYLTGH. Residues 4808–4822 show a composition bias toward acidic residues; sequence AADDSSEDSDNEDAD. Phosphoserine occurs at positions 4812, 4813, and 4816. Residue Thr4829 is modified to Phosphothreonine.

As to quaternary structure, interacts (when phosphorylated at Thr-4829 and sumoylated) with RNF8 (via FHA domain); this interaction increases after ionising radiation (IR) treatment. Interacts with XPA. Interacts with NEURL4. Via its interaction with NEURL4, may indirectly interact with CCP110 and CEP97. Phosphorylation at Thr-4829 is required for interaction with RNF8. In terms of processing, sumoylated with SUMO1 by PIAS4 in response to double-strand breaks (DSBs), promoting the interaction with RNF8. In terms of tissue distribution, highest levels are found in brain and testis with lower levels in heart, lung, liver, skeletal muscle and kidney. Little expression detected in spleen.

It localises to the cytoplasm. Its subcellular location is the cytoskeleton. It is found in the microtubule organizing center. The protein localises to the centrosome. The protein resides in the centriole. It localises to the nucleus. It catalyses the reaction S-ubiquitinyl-[E2 ubiquitin-conjugating enzyme]-L-cysteine + [acceptor protein]-L-lysine = [E2 ubiquitin-conjugating enzyme]-L-cysteine + N(6)-ubiquitinyl-[acceptor protein]-L-lysine.. The protein operates within protein modification; protein ubiquitination. Functionally, E3 ubiquitin-protein ligase that regulates ubiquitin-dependent retention of repair proteins on damaged chromosomes. Recruited to sites of DNA damage in response to ionizing radiation (IR) and facilitates the assembly of UBE2N and RNF8 promoting DNA damage-induced formation of 'Lys-63'-linked ubiquitin chains. Acts as a mediator of binding specificity between UBE2N and RNF8. Involved in the maintenance of RNF168 levels. E3 ubiquitin-protein ligase that promotes the ubiquitination and proteasomal degradation of XPA which influences the circadian oscillation of DNA excision repair activity. By controlling the steady-state expression of the IGF1R receptor, indirectly regulates the insulin-like growth factor receptor signaling pathway. Also modulates iron metabolism by regulating the basal turnover of FBXL5. In Mus musculus (Mouse), this protein is E3 ubiquitin-protein ligase HERC2.